Reading from the N-terminus, the 223-residue chain is Ion-translocating oxidoreductase complex subunit E (223 aa).

Transmembrane regions (helical) follow at residues 17–37 (NGVLCMLLGMCPTMAMTGTAT), 40–60 (LGMGLATAAVMAASNLMVAMF), 70–90 (IPVYILIVAANVTFVDLGMNA), 94–114 (ELYKVLGLFIPLIVSNCLPLA), 129–149 (FLDGLFMGLGFTLALTAIGAV), and 182–202 (WGILVLILPPGGFLIAGLMVV).

Belongs to the NqrDE/RnfAE family. As to quaternary structure, the complex is composed of six subunits: RnfA, RnfB, RnfC, RnfD, RnfE and RnfG.

Its subcellular location is the cell inner membrane. Functionally, part of a membrane-bound complex that couples electron transfer with translocation of ions across the membrane. This Paramagnetospirillum magneticum (strain ATCC 700264 / AMB-1) (Magnetospirillum magneticum) protein is Ion-translocating oxidoreductase complex subunit E.